The following is a 184-amino-acid chain: Protein GrpE (184 aa).

Positions 1-35 are disordered; the sequence is MTQENQNPPPEQEDVAADPQVNEAAASEPAAVKTP.

It belongs to the GrpE family. As to quaternary structure, homodimer.

Its subcellular location is the cytoplasm. Functionally, participates actively in the response to hyperosmotic and heat shock by preventing the aggregation of stress-denatured proteins, in association with DnaK and GrpE. It is the nucleotide exchange factor for DnaK and may function as a thermosensor. Unfolded proteins bind initially to DnaJ; upon interaction with the DnaJ-bound protein, DnaK hydrolyzes its bound ATP, resulting in the formation of a stable complex. GrpE releases ADP from DnaK; ATP binding to DnaK triggers the release of the substrate protein, thus completing the reaction cycle. Several rounds of ATP-dependent interactions between DnaJ, DnaK and GrpE are required for fully efficient folding. This is Protein GrpE from Polynucleobacter asymbioticus (strain DSM 18221 / CIP 109841 / QLW-P1DMWA-1) (Polynucleobacter necessarius subsp. asymbioticus).